Consider the following 1026-residue polypeptide: MRFFALFIYRPVATILIAAAITLCGILGFRLLPVAPLPQVDFPVIMVSASLPGASPETMASSVATPLERSLGRIAGVNEMTSSSSLGSTRIILEFNFDRDINGAARDVQAAINAAQSLLPGGMPSRPTYRKANPSDAPIMILTLTSESWSQGKLYDFASTQLAQTIAQIDGVGDVDVGGSSLPAVRVGLNPQALFNQGVSLDEVREAIDSANVRRPQGAIEDSVHRWQIQTNDELKTAAEYQPLIIHYNNGAAVRLGDVASVTDSVQDVRNAGMTNAKPAILLMIRKLPEANIIQTVDGIRAKLPELRAMIPAAIDLQIAQDRSPTIRASLQEVEETLVISVALVILVVFLFLRSGRATLIPAVAVPVSLIGTFAAMYLCGFSLNNLSLMALTIATGFVVDDAIVVLENIARHLEAGMKPLQAALQGTREVGFTVISMSLSLVAVFLPLLLMGGLPGRLLREFAVTLSVAIGISLVVSLTLTPMMCGWMLKSSKPRTQPRKRGVGRLLVALQQGYGTSLKWVLNHTRLVGVVFLGTVALNIWLYIAIPKTFFPEQDTGVLMGGIQADQSISFQAMRGKLQDFMKIIRDDPAVNNVTGFTGGSRVNSGMMFITLKPRGERKETAQQIIDRLRVKLAKEPGARLFLMAVQDIRVGGRQANASYQYTLLSDSLAALREWEPKIRKALSALPQLADVNSDQQDNGAEMNLIYDRDTMSRLGIDVQAANSLLNNAFGQRQISTIYQPMNQYKVVMEVDPRYSQDISALEKMFVINRDGKAIPLSYFAQWRPANAPLSVNHQGLSAASTIAFNLPTGTSLSQATEAINRTMTQLGVPPTVRGSFSGTAQVFQQTMNSQLILIVAAIATVYIVLGILYESYVHPLTILSTLPSAGVGALLALELFNAPFSLIALIGIMLLIGIVKKNAIMMVDFALEAQRSGGLTPEQAIFQACLLRFRPIMMTTLAALFGALPLVLSGGDGSELRQPLGITIVGGLVMSQLLTLYTTPVVYLFFDRLRRRFSRKNSKPVVEI.

A run of 11 helical transmembrane segments spans residues 15–35, 333–353, 360–380, 387–407, 431–451, 463–483, 528–548, 853–873, 897–917, 953–973, and 984–1004; these read ILIA…LPVA, EVEE…FLFL, LIPA…MYLC, LSLM…IVVL, VGFT…PLLL, FAVT…TLTP, LVGV…IAIP, LILI…LYES, LFNA…IGIV, PIMM…LSGG, and ITIV…TPVV.

Belongs to the resistance-nodulation-cell division (RND) (TC 2.A.6) family. MdtC subfamily. As to quaternary structure, part of a tripartite efflux system composed of MdtA, MdtB and MdtC. MdtC forms a heteromultimer with MdtB.

It localises to the cell inner membrane. In Salmonella schwarzengrund (strain CVM19633), this protein is Multidrug resistance protein MdtC.